The primary structure comprises 332 residues: Ribosomal RNA small subunit methyltransferase C (332 aa).

It belongs to the methyltransferase superfamily. RsmC family. Monomer.

Its subcellular location is the cytoplasm. It catalyses the reaction guanosine(1207) in 16S rRNA + S-adenosyl-L-methionine = N(2)-methylguanosine(1207) in 16S rRNA + S-adenosyl-L-homocysteine + H(+). Functionally, specifically methylates the guanine in position 1207 of 16S rRNA in the 30S particle. This Pseudomonas syringae pv. tomato (strain ATCC BAA-871 / DC3000) protein is Ribosomal RNA small subunit methyltransferase C.